The primary structure comprises 171 residues: Disulfide bond formation protein B (171 aa).

Topologically, residues 1-13 (MSALTRFAQSRLA) are cytoplasmic. The helical transmembrane segment at 14-30 (WTLLLLTAVGLEACALF) threads the bilayer. Topologically, residues 31–48 (FQHVMKLDPCVMCIYQRL) are periplasmic. A disulfide bridge connects residues C40 and C43. A helical membrane pass occupies residues 49–64 (AVLGVLTAGLIGVVGH). Over 65-71 (QFRLLRF) the chain is Cytoplasmic. The helical transmembrane segment at 72 to 89 (LGVLLWGVSAAWGLKLAL) threads the bilayer. At 90–144 (ELVEMQTNPSPFSTCSFLPEFPEWMPLHEWFPSVFLPTGMCTDIPWEMFGITMSQ) the chain is on the periplasmic side. C104 and C130 are joined by a disulfide. A helical membrane pass occupies residues 145–163 (WMVVAFSTYLIALVVFIVP). Residues 164-171 (ALMPTKKA) lie on the Cytoplasmic side of the membrane.

The protein belongs to the DsbB family.

The protein resides in the cell inner membrane. Its function is as follows. Required for disulfide bond formation in some periplasmic proteins. Acts by oxidizing the DsbA protein. In Shewanella loihica (strain ATCC BAA-1088 / PV-4), this protein is Disulfide bond formation protein B.